Here is a 109-residue protein sequence, read N- to C-terminus: Tyrosine-protein phosphatase 16 (109 aa).

Positions 1 to 109 (WRMVTEHTST…RIKTQKPIVV (109 aa)) constitute a Tyrosine-protein phosphatase domain. D81 serves as a coordination point for substrate.

It belongs to the protein-tyrosine phosphatase family.

It catalyses the reaction O-phospho-L-tyrosyl-[protein] + H2O = L-tyrosyl-[protein] + phosphate. The sequence is that of Tyrosine-protein phosphatase 16 (STY-16) from Styela plicata (Wrinkled sea squirt).